The primary structure comprises 510 residues: 2,3-bisphosphoglycerate-independent phosphoglycerate mutase (510 aa).

Residues D12 and S62 each contribute to the Mn(2+) site. The active-site Phosphoserine intermediate is S62. Residues H123, 153–154, R185, R191, 261–264, and K336 contribute to the substrate site; these read RD and RPDR. Mn(2+) contacts are provided by D403, H407, D444, H445, and H462.

It belongs to the BPG-independent phosphoglycerate mutase family. In terms of assembly, monomer. Mn(2+) serves as cofactor.

The catalysed reaction is (2R)-2-phosphoglycerate = (2R)-3-phosphoglycerate. Its pathway is carbohydrate degradation; glycolysis; pyruvate from D-glyceraldehyde 3-phosphate: step 3/5. In terms of biological role, essential for rapid growth and for sporulation. Catalyzes the interconversion of 2-phosphoglycerate and 3-phosphoglycerate. The polypeptide is 2,3-bisphosphoglycerate-independent phosphoglycerate mutase (Priestia megaterium (strain DSM 319 / IMG 1521) (Bacillus megaterium)).